The following is a 196-amino-acid chain: Ribosomal RNA small subunit methyltransferase G (196 aa).

S-adenosyl-L-methionine-binding positions include G77, F82, 127–128 (AE), and R140.

This sequence belongs to the methyltransferase superfamily. RNA methyltransferase RsmG family.

It is found in the cytoplasm. Specifically methylates the N7 position of a guanine in 16S rRNA. This is Ribosomal RNA small subunit methyltransferase G from Aquifex aeolicus (strain VF5).